We begin with the raw amino-acid sequence, 252 residues long: Proteasome subunit alpha 1 (252 aa).

Residue M1 is modified to N-acetylmethionine; alternate.

Belongs to the peptidase T1A family. The 20S proteasome core is composed of 14 alpha and 14 beta subunits that assemble into four stacked heptameric rings, resulting in a barrel-shaped structure. The two inner rings, each composed of seven catalytic beta subunits, are sandwiched by two outer rings, each composed of seven alpha subunits. H.volcanii produces at least 2 types of 20S proteasomes: an alpha1-beta proteasome and a proteasome containing all three subunits (alpha1, alpha2, and beta) that appears to be asymmetrical with homo-oligomeric alpha1 and alpha2 rings positioned on separate ends. The catalytic chamber with the active sites is on the inside of the barrel. Has probably a gated structure, the ends of the cylinder being occluded by the N-termini of the alpha-subunits. Is likely capped at one or both ends by the proteasome regulatory ATPase, PAN. Post-translationally, acetylated. The acetylated form at Met-1 was shown to be in 100-fold excess of the unacetylated form with the initiator methionine removed in whole cells and purified 20S proteasomes.

Its subcellular location is the cytoplasm. Its activity is regulated as follows. The formation of the proteasomal ATPase PAN-20S proteasome complex, via the docking of the C-termini of PAN into the intersubunit pockets in the alpha-rings, triggers opening of the gate for substrate entry. Interconversion between the open-gate and close-gate conformations leads to a dynamic regulation of the 20S proteasome proteolysis activity. In vitro, the chymotrypsin-like activity of the alpha1-beta proteasome is potently inhibited by carbobenzoxyl-leucinyl-leucinyl-leucinal-H (MG132) and significantly by N-acetyl-leucinyl-leucinyl-norleucinal-H (calpain inhibitor I). Component of the proteasome core, a large protease complex with broad specificity involved in protein degradation. The H.volcanii alpha1-beta proteasome is able to cleave oligopeptides after Phe, Tyr and Trp, poorly after Glu but not after Arg. Thus, displays chymotrypsin-like activity, low caspase-like activity but no trypsin-like activity. This chain is Proteasome subunit alpha 1, found in Haloferax volcanii (strain ATCC 29605 / DSM 3757 / JCM 8879 / NBRC 14742 / NCIMB 2012 / VKM B-1768 / DS2) (Halobacterium volcanii).